We begin with the raw amino-acid sequence, 191 residues long: MRGKTQEDRDLIEMLDPVAESLGYEIVRLRLMGGTEQRRLQIMAEHPLLEDGSGGDMNVEDCAKLSRAVSEVLDAADPIAGEYTLEVSSPGIDRPLTRLKDFDDYAGLEARIELDRVAEGRKRFKGELAGVEDDQVGLNIEGEDDVTVYFPFAWVIDAKLVMTDALMERGAKQRAARLESDNEDLSESEED.

The protein belongs to the RimP family.

Its subcellular location is the cytoplasm. Functionally, required for maturation of 30S ribosomal subunits. This is Ribosome maturation factor RimP from Caulobacter vibrioides (strain NA1000 / CB15N) (Caulobacter crescentus).